Here is a 620-residue protein sequence, read N- to C-terminus: Altered inheritance of mitochondria protein 9, mitochondrial (620 aa).

A mitochondrion-targeting transit peptide spans 1-35 (MLSRVARNSSLLKQLPKLRQTTVLPVVLKNSIRFH).

It belongs to the AIM9 family.

It localises to the mitochondrion. This is Altered inheritance of mitochondria protein 9, mitochondrial (AIM9) from Candida tropicalis (strain ATCC MYA-3404 / T1) (Yeast).